The following is a 322-amino-acid chain: Cysteine protease YopT (322 aa).

Catalysis depends on residues cysteine 139, histidine 258, and aspartate 274.

The protein belongs to the peptidase C58 family. As to quaternary structure, interacts with human ARHA.

Its subcellular location is the secreted. Its function is as follows. Cysteine protease, which is translocated into infected cells and plays a central role in pathogenesis by cleaving the C-terminus end of the human small GTPase RhoA/ARHA, a regulator of cytoskeleton. Once cleaved, ARHA loses its lipid modification, and is released from the cell membrane, leading to the subsequent disruption of actin cytoskeleton of the host cell. The polypeptide is Cysteine protease YopT (yopT) (Yersinia pseudotuberculosis serotype I (strain IP32953)).